The primary structure comprises 447 residues: Folate synthesis bifunctional protein (447 aa).

Positions 1-165 (MTTAQFICLS…SFGEIAHLLP (165 aa)) are HPPK. The 260-residue stretch at 179 to 438 (TLLMGVVNVT…DVEANQRVLS (260 aa)) folds into the Pterin-binding domain. Positions 181–447 (LMGVVNVTDN…SAAAWSGVHV (267 aa)) are DHPS. Residue Asn186 participates in Mg(2+) binding. (7,8-dihydropterin-6-yl)methyl diphosphate is bound by residues Thr226, Asp266, Asn286, Asp356, Lys392, and 426 to 428 (RVH).

This sequence in the C-terminal section; belongs to the DHPS family. The protein in the N-terminal section; belongs to the HPPK family. Mg(2+) is required as a cofactor.

The catalysed reaction is 6-hydroxymethyl-7,8-dihydropterin + ATP = (7,8-dihydropterin-6-yl)methyl diphosphate + AMP + H(+). The enzyme catalyses (7,8-dihydropterin-6-yl)methyl diphosphate + 4-aminobenzoate = 7,8-dihydropteroate + diphosphate. It functions in the pathway cofactor biosynthesis; tetrahydrofolate biosynthesis; 2-amino-4-hydroxy-6-hydroxymethyl-7,8-dihydropteridine diphosphate from 7,8-dihydroneopterin triphosphate: step 4/4. It participates in cofactor biosynthesis; tetrahydrofolate biosynthesis; 7,8-dihydrofolate from 2-amino-4-hydroxy-6-hydroxymethyl-7,8-dihydropteridine diphosphate and 4-aminobenzoate: step 1/2. This chain is Folate synthesis bifunctional protein (folKP), found in Chlamydia caviae (strain ATCC VR-813 / DSM 19441 / 03DC25 / GPIC) (Chlamydophila caviae).